Reading from the N-terminus, the 173-residue chain is Regulator of ribonuclease activity A (173 aa).

The protein belongs to the RraA family. As to quaternary structure, homotrimer. Binds to both RNA-binding sites in the C-terminal region of Rne and to RhlB.

Its subcellular location is the cytoplasm. Its function is as follows. Globally modulates RNA abundance by binding to RNase E (Rne) and regulating its endonucleolytic activity. Can modulate Rne action in a substrate-dependent manner by altering the composition of the degradosome. Modulates RNA-binding and helicase activities of the degradosome. This chain is Regulator of ribonuclease activity A, found in Vibrio vulnificus (strain CMCP6).